The sequence spans 1057 residues: Adenylate-forming reductase stbB (1057 aa).

The adenylation (A) domain stretch occupies residues 21–378 (STKRQPGAVC…FRLRTDMNFE (358 aa)). AMP is bound by residues His251, 344–345 (NF), Thr349, and 423–426 (AVGR). Positions 564-651 (ETLEEDIKAL…QMAAAIKNPS (88 aa)) constitute a Carrier domain. Ser600 is modified (O-(pantetheine 4'-phosphoryl)serine). The reductase (R) domain stretch occupies residues 693–1025 (IVVVTGSSGS…SGAVILGTDV (333 aa)). Residues 700–703 (SGSL), 783–785 (AAW), Tyr858, and Lys862 contribute to the NADP(+) site.

The protein belongs to the adenylate-forming reductase family.

The catalysed reaction is ilicicolinate B + AH2 + ATP = ilicicolin B + A + AMP + diphosphate. Its pathway is secondary metabolite biosynthesis; terpenoid biosynthesis. In terms of biological role, nonribosomal peptide synthase-like protein; part of the cluster that mediates the biosynthesis of LL-Z1272-beta, also known as ilicicolin B, a prenylated aryl-aldehyde produced by several fungi and that serves as a key pathway intermediate for many fungal meroterpenoids. The first step in the pathway is performed by the non-reducing polyketide synthase stbA that produces orsellinic acid by condensing acetyl-CoA with 3 malonyl-CoA units. The prenyltransferase stbC then prenylates orsenilic acid into grifolic acid. Finally, grifolic acid is reduced to ilicicolin B by the NRPS-like protein stbB. This is Adenylate-forming reductase stbB from Stachybotrys bisbyi (Hyalostachybotrys bisbyi).